A 372-amino-acid polypeptide reads, in one-letter code: 3-dehydroquinate synthase (372 aa).

Residues 113 to 117 (GVIGD), 137 to 138 (TS), Lys150, Lys159, and 177 to 180 (TLKT) contribute to the NAD(+) site. Zn(2+) is bound by residues Glu192, His257, and His274.

It belongs to the sugar phosphate cyclases superfamily. Dehydroquinate synthase family. Requires Co(2+) as cofactor. The cofactor is Zn(2+). NAD(+) is required as a cofactor.

It localises to the cytoplasm. It catalyses the reaction 7-phospho-2-dehydro-3-deoxy-D-arabino-heptonate = 3-dehydroquinate + phosphate. Its pathway is metabolic intermediate biosynthesis; chorismate biosynthesis; chorismate from D-erythrose 4-phosphate and phosphoenolpyruvate: step 2/7. Functionally, catalyzes the conversion of 3-deoxy-D-arabino-heptulosonate 7-phosphate (DAHP) to dehydroquinate (DHQ). The protein is 3-dehydroquinate synthase of Acaryochloris marina (strain MBIC 11017).